We begin with the raw amino-acid sequence, 474 residues long: Proline--tRNA ligase (474 aa).

It belongs to the class-II aminoacyl-tRNA synthetase family. ProS type 3 subfamily. In terms of assembly, homodimer.

The protein resides in the cytoplasm. The enzyme catalyses tRNA(Pro) + L-proline + ATP = L-prolyl-tRNA(Pro) + AMP + diphosphate. Its function is as follows. Catalyzes the attachment of proline to tRNA(Pro) in a two-step reaction: proline is first activated by ATP to form Pro-AMP and then transferred to the acceptor end of tRNA(Pro). The chain is Proline--tRNA ligase from Phytoplasma australiense.